A 259-amino-acid polypeptide reads, in one-letter code: Ribonuclease PH (259 aa).

Residues R88 and 126–128 (GTR) contribute to the phosphate site.

Belongs to the RNase PH family. Homohexameric ring arranged as a trimer of dimers.

It carries out the reaction tRNA(n+1) + phosphate = tRNA(n) + a ribonucleoside 5'-diphosphate. Its function is as follows. Phosphorolytic 3'-5' exoribonuclease that plays an important role in tRNA 3'-end maturation. Removes nucleotide residues following the 3'-CCA terminus of tRNAs; can also add nucleotides to the ends of RNA molecules by using nucleoside diphosphates as substrates, but this may not be physiologically important. Probably plays a role in initiation of 16S rRNA degradation (leading to ribosome degradation) during starvation. This chain is Ribonuclease PH, found in Mycobacterium leprae (strain Br4923).